A 344-amino-acid polypeptide reads, in one-letter code: 3-isopropylmalate dehydrogenase (344 aa).

Residue 74 to 87 (GPKWDALPRKIRPE) coordinates NAD(+). The substrate site is built by Arg-94, Arg-104, Arg-132, and Asp-217. Mg(2+) is bound by residues Asp-217, Asp-241, and Asp-245. NAD(+) is bound at residue 274 to 286 (GSAPDIAGKGIAN).

The protein belongs to the isocitrate and isopropylmalate dehydrogenases family. LeuB type 1 subfamily. In terms of assembly, homodimer. Requires Mg(2+) as cofactor. It depends on Mn(2+) as a cofactor.

It is found in the cytoplasm. It catalyses the reaction (2R,3S)-3-isopropylmalate + NAD(+) = 4-methyl-2-oxopentanoate + CO2 + NADH. The protein operates within amino-acid biosynthesis; L-leucine biosynthesis; L-leucine from 3-methyl-2-oxobutanoate: step 3/4. In terms of biological role, catalyzes the oxidation of 3-carboxy-2-hydroxy-4-methylpentanoate (3-isopropylmalate) to 3-carboxy-4-methyl-2-oxopentanoate. The product decarboxylates to 4-methyl-2 oxopentanoate. The chain is 3-isopropylmalate dehydrogenase (leuB) from Thermus aquaticus.